We begin with the raw amino-acid sequence, 739 residues long: MTEAEAAQELARLAGLLAQANLAYHTLDAPEISDADYDALKQRNAEIEARFPHLKRPDSPSEQVGARPGEGFSKVSHAVRMMSLGNAFDDADVADFDRSIRKYLGLDVETALAYTAEPKIDGLSLSLRYEQGVLVQAATRGDGEVGENVTANARTIADIPARIEGAPEVLEVRGEVYMSHADFAALNTRQEAEGGKLFANPRNAAAGSLRQLDAAITRARPLRFFAYSWGELSEPLAETQMQAIERLAGLGFQTNPLTRRCADLDAMIAHYRDIEAQRATLGYDIDGVVYKLDDLGLQARLGFRSTTPRWAIAHKFPAELAWTRLEAIDIQVGRTGALSPVARLTPVTVGGVVVSNATLHNEDYIAGRDSRGQEIRDGKDIRVGDWVQVYRAGDVIPKIADVDLNKRPEGANPFEFPEQCPECGSPAIREEGDAVRRCTGGVICPAQAVEKLKHFVSRAAFDIEGLGAKQVEQFHADGWIREPADIFELRSRYGEGLQQLKNREGWGEKSATNLFQAIDDKRRIPLARLIFALGIRHVGEVGAKDLSLHYRDWDAMAAALDTARLAALAHRAADTAEEQERQQAQAEGRRARISDTRAAVIAAQEVPPEAAAAWADLIGVDGIGATLGLSLSDAFANGDERAAFDRLSAHLTVIPPDAPARDSPVAGKTVVFTGSLEKMTRAEAKARAEALGAKVAGSVSKKTDLLVAGPGAGSKLKTAESLGIETLDEDGWLKLIEGL.

Residue 34–38 (DADYD) participates in NAD(+) binding. The span at 49-59 (ARFPHLKRPDS) shows a compositional bias: basic and acidic residues. The disordered stretch occupies residues 49 to 70 (ARFPHLKRPDSPSEQVGARPGE). NAD(+) is bound by residues 83–84 (SL) and Glu117. The active-site N6-AMP-lysine intermediate is Lys119. Arg140, Glu175, Lys291, and Lys315 together coordinate NAD(+). Positions 420, 423, 438, and 444 each coordinate Zn(2+). Residues 660–739 (ARDSPVAGKT…DGWLKLIEGL (80 aa)) enclose the BRCT domain.

Belongs to the NAD-dependent DNA ligase family. LigA subfamily. Mg(2+) is required as a cofactor. It depends on Mn(2+) as a cofactor.

It carries out the reaction NAD(+) + (deoxyribonucleotide)n-3'-hydroxyl + 5'-phospho-(deoxyribonucleotide)m = (deoxyribonucleotide)n+m + AMP + beta-nicotinamide D-nucleotide.. DNA ligase that catalyzes the formation of phosphodiester linkages between 5'-phosphoryl and 3'-hydroxyl groups in double-stranded DNA using NAD as a coenzyme and as the energy source for the reaction. It is essential for DNA replication and repair of damaged DNA. The polypeptide is DNA ligase (Ruegeria pomeroyi (strain ATCC 700808 / DSM 15171 / DSS-3) (Silicibacter pomeroyi)).